A 391-amino-acid chain; its full sequence is Phosphoglycerate kinase (391 aa).

Substrate contacts are provided by residues 21–23 (DLN), R36, 59–62 (HLGR), R113, and R146. Residues K197, E319, and 345 to 348 (GGDT) contribute to the ATP site.

It belongs to the phosphoglycerate kinase family. In terms of assembly, monomer.

The protein resides in the cytoplasm. It carries out the reaction (2R)-3-phosphoglycerate + ATP = (2R)-3-phospho-glyceroyl phosphate + ADP. It functions in the pathway carbohydrate degradation; glycolysis; pyruvate from D-glyceraldehyde 3-phosphate: step 2/5. This Xanthomonas oryzae pv. oryzae (strain MAFF 311018) protein is Phosphoglycerate kinase.